The following is a 416-amino-acid chain: Ribulose bisphosphate carboxylase large chain (416 aa).

Lys-5 is modified (N6,N6,N6-trimethyllysine). Asn-114 and Thr-164 together coordinate substrate. The Proton acceptor role is filled by Lys-166. Lys-168 provides a ligand contact to substrate. Lys-192, Asp-194, and Glu-195 together coordinate Mg(2+). Lys-192 carries the post-translational modification N6-carboxylysine. The Proton acceptor role is filled by His-285. Residues Arg-286, His-318, and Ser-370 each coordinate substrate.

The protein belongs to the RuBisCO large chain family. Type I subfamily. Heterohexadecamer of 8 large chains and 8 small chains; disulfide-linked. The disulfide link is formed within the large subunit homodimers. The cofactor is Mg(2+). In terms of processing, the disulfide bond which can form in the large chain dimeric partners within the hexadecamer appears to be associated with oxidative stress and protein turnover.

The protein resides in the plastid. The protein localises to the chloroplast. The enzyme catalyses 2 (2R)-3-phosphoglycerate + 2 H(+) = D-ribulose 1,5-bisphosphate + CO2 + H2O. It catalyses the reaction D-ribulose 1,5-bisphosphate + O2 = 2-phosphoglycolate + (2R)-3-phosphoglycerate + 2 H(+). Its function is as follows. RuBisCO catalyzes two reactions: the carboxylation of D-ribulose 1,5-bisphosphate, the primary event in carbon dioxide fixation, as well as the oxidative fragmentation of the pentose substrate in the photorespiration process. Both reactions occur simultaneously and in competition at the same active site. This is Ribulose bisphosphate carboxylase large chain (rbcL) from Spigelia marilandica (Woodland pinkroot).